The chain runs to 250 residues: Tetrahydromethanopterin S-methyltransferase subunit D (250 aa).

The next 6 membrane-spanning stretches (helical) occupy residues 9–29, 47–67, 86–106, 144–164, 184–204, and 230–250; these read IIWMALITIGGVLISWSVHFV, GTVQLAAGAGLTGLVSAGFMM, IMIAVTMIVGSIVYVYGVGVV, IIGGGLGGIGGSLVYYSLIEV, LVAVAAIFAIGIFFVNAVIPS, and LVASIMCAIVAVVAIAQLGGI.

The protein belongs to the MtrD family. The complex is composed of 8 subunits; MtrA, MtrB, MtrC, MtrD, MtrE, MtrF, MtrG and MtrH.

The protein resides in the cell membrane. It catalyses the reaction 5-methyl-5,6,7,8-tetrahydromethanopterin + coenzyme M + 2 Na(+)(in) = 5,6,7,8-tetrahydromethanopterin + methyl-coenzyme M + 2 Na(+)(out). The protein operates within one-carbon metabolism; methanogenesis from CO(2); methyl-coenzyme M from 5,10-methylene-5,6,7,8-tetrahydromethanopterin: step 2/2. Functionally, part of a complex that catalyzes the formation of methyl-coenzyme M and tetrahydromethanopterin from coenzyme M and methyl-tetrahydromethanopterin. This is an energy-conserving, sodium-ion translocating step. The protein is Tetrahydromethanopterin S-methyltransferase subunit D of Methanosarcina barkeri (strain Fusaro / DSM 804).